The chain runs to 588 residues: Probable fumarate reductase Ifc3 (588 aa).

The first 22 residues, 1-22 (MKLKYLVSAMALVVLSSGTAMA), serve as a signal peptide directing secretion. Heme c-binding residues include His-31, Cys-37, Cys-40, His-41, Cys-58, Cys-61, His-62, His-78, His-81, Cys-87, Cys-90, His-91, Gly-93, His-94, Cys-101, Cys-104, and His-105. The interval 135–588 (AIAAGPSETT…DNAAKHALDK (454 aa)) is flavoprotein-like. Positions 154, 173, 181, 182, 187, and 188 each coordinate FAD. Gly-187 contacts fumarate. Residue Gly-187 participates in succinate binding. Arg-218 lines the heme c pocket. Residues Val-295 and Asp-361 each coordinate FAD. 3 residues coordinate succinate: His-382, Ser-394, and Glu-395. Fumarate contacts are provided by Ser-394 and Glu-395. The active-site Proton donor is Arg-419. A fumarate-binding site is contributed by His-521. His-521 is a succinate binding site. Glu-551 lines the FAD pocket. The fumarate site is built by Arg-561 and Gly-564. Residues Arg-561 and Gly-564 each coordinate succinate. FAD is bound by residues Gly-564, Ala-566, and Ile-567.

Homodimer. FAD is required as a cofactor. It depends on heme c as a cofactor.

The protein resides in the periplasm. In terms of biological role, flavocytochrome that catalyzes the reduction of fumarate to succinate in vitro. Is essentially unidirectional, catalyzing only fumarate reduction. In vitro, can use the artificial electron donor methyl viologen. May be involved in an alternative route for electron transport to Fe(3+). This Shewanella frigidimarina (strain NCIMB 400) protein is Probable fumarate reductase Ifc3.